We begin with the raw amino-acid sequence, 164 residues long: Phosphopantetheine adenylyltransferase (164 aa).

Residue T14 participates in substrate binding. ATP is bound by residues 14-15 (TF) and H22. The substrate site is built by K46, L78, and R92. ATP is bound by residues 93–95 (GLR), E103, and 128–134 (HAFISST).

This sequence belongs to the bacterial CoaD family. In terms of assembly, homohexamer. Requires Mg(2+) as cofactor.

Its subcellular location is the cytoplasm. It carries out the reaction (R)-4'-phosphopantetheine + ATP + H(+) = 3'-dephospho-CoA + diphosphate. Its pathway is cofactor biosynthesis; coenzyme A biosynthesis; CoA from (R)-pantothenate: step 4/5. In terms of biological role, reversibly transfers an adenylyl group from ATP to 4'-phosphopantetheine, yielding dephospho-CoA (dPCoA) and pyrophosphate. The chain is Phosphopantetheine adenylyltransferase from Vibrio cholerae serotype O1 (strain ATCC 39541 / Classical Ogawa 395 / O395).